A 367-amino-acid chain; its full sequence is Phosphoribosylaminoimidazole-succinocarboxamide synthase (367 aa).

The protein belongs to the SAICAR synthetase family.

It carries out the reaction 5-amino-1-(5-phospho-D-ribosyl)imidazole-4-carboxylate + L-aspartate + ATP = (2S)-2-[5-amino-1-(5-phospho-beta-D-ribosyl)imidazole-4-carboxamido]succinate + ADP + phosphate + 2 H(+). Its pathway is purine metabolism; IMP biosynthesis via de novo pathway; 5-amino-1-(5-phospho-D-ribosyl)imidazole-4-carboxamide from 5-amino-1-(5-phospho-D-ribosyl)imidazole-4-carboxylate: step 1/2. This is Phosphoribosylaminoimidazole-succinocarboxamide synthase from Shewanella piezotolerans (strain WP3 / JCM 13877).